Consider the following 479-residue polypeptide: Ribosomal RNA small subunit methyltransferase F (479 aa).

S-adenosyl-L-methionine-binding positions include 125–131 (AAAPGSK), glutamate 149, aspartate 176, and aspartate 194. Catalysis depends on cysteine 247, which acts as the Nucleophile.

The protein belongs to the class I-like SAM-binding methyltransferase superfamily. RsmB/NOP family.

Its subcellular location is the cytoplasm. It catalyses the reaction cytidine(1407) in 16S rRNA + S-adenosyl-L-methionine = 5-methylcytidine(1407) in 16S rRNA + S-adenosyl-L-homocysteine + H(+). In terms of biological role, specifically methylates the cytosine at position 1407 (m5C1407) of 16S rRNA. This chain is Ribosomal RNA small subunit methyltransferase F, found in Escherichia coli O127:H6 (strain E2348/69 / EPEC).